Consider the following 338-residue polypeptide: Lipoate-protein ligase A (338 aa).

Positions 29-216 constitute a BPL/LPL catalytic domain; the sequence is PATQRVLFLW…AFFAHYGERV (188 aa). Residues R71, 76-79, and K134 each bind ATP; that span reads GAVF. Residue K134 participates in (R)-lipoate binding.

This sequence belongs to the LplA family. As to quaternary structure, monomer.

It localises to the cytoplasm. It carries out the reaction L-lysyl-[lipoyl-carrier protein] + (R)-lipoate + ATP = N(6)-[(R)-lipoyl]-L-lysyl-[lipoyl-carrier protein] + AMP + diphosphate + H(+). Its pathway is protein modification; protein lipoylation via exogenous pathway; protein N(6)-(lipoyl)lysine from lipoate: step 1/2. It participates in protein modification; protein lipoylation via exogenous pathway; protein N(6)-(lipoyl)lysine from lipoate: step 2/2. In terms of biological role, catalyzes both the ATP-dependent activation of exogenously supplied lipoate to lipoyl-AMP and the transfer of the activated lipoyl onto the lipoyl domains of lipoate-dependent enzymes. This Escherichia coli O157:H7 protein is Lipoate-protein ligase A.